The sequence spans 835 residues: Leucine--tRNA ligase (835 aa).

The short motif at 36 to 46 is the 'HIGH' region element; that stretch reads PYPSGKIHVGH. The 'KMSKS' region signature appears at 602–606; sequence KMSKS. Residue K605 participates in ATP binding.

It belongs to the class-I aminoacyl-tRNA synthetase family.

The protein localises to the cytoplasm. It catalyses the reaction tRNA(Leu) + L-leucine + ATP = L-leucyl-tRNA(Leu) + AMP + diphosphate. The polypeptide is Leucine--tRNA ligase (Rickettsia conorii (strain ATCC VR-613 / Malish 7)).